The primary structure comprises 599 residues: Putative sensor histidine kinase NtrY-like (599 aa).

Helical transmembrane passes span 17–37 (ILIL…FYVI), 44–64 (FSTI…LGIL), 85–105 (IVIA…VFSV), and 285–305 (IMFI…GVLF). Residues 307–361 (AQIVKPIKKLVTATDKVKDGDLTVQVPENEVDKDEIGTLYVAFNRMIKQLSRQQR) enclose the HAMP domain. The region spanning 378–589 (KVAHEIKNPL…IIDIKFDLKE (212 aa)) is the Histidine kinase domain. Phosphohistidine; by autocatalysis is present on H381.

Its subcellular location is the cell membrane. The enzyme catalyses ATP + protein L-histidine = ADP + protein N-phospho-L-histidine.. Functionally, member of the two-component regulatory system RT0603/RT0550. The polypeptide is Putative sensor histidine kinase NtrY-like (Rickettsia typhi (strain ATCC VR-144 / Wilmington)).